The chain runs to 186 residues: Ribosome-recycling factor (186 aa).

Positions 135–162 (DGMDGLKKAEKDGDIGQDESRAQSERVQ) are disordered.

Belongs to the RRF family.

Its subcellular location is the cytoplasm. In terms of biological role, responsible for the release of ribosomes from messenger RNA at the termination of protein biosynthesis. May increase the efficiency of translation by recycling ribosomes from one round of translation to another. The chain is Ribosome-recycling factor from Sinorhizobium fredii (strain NBRC 101917 / NGR234).